A 468-amino-acid chain; its full sequence is PTS system mannitol-specific EIICB component (468 aa).

Residues 1–25 (MNNQPSFRARVQKFGSFLSGMIMPN) are Cytoplasmic-facing. Positions 14-344 (FGSFLSGMIM…ILKTSKATAE (331 aa)) constitute a PTS EIIC type-2 domain. A helical membrane pass occupies residues 26–47 (IGAFIAWGLITALFIPTGWWPN). At 48–51 (EQLA) the chain is on the extracellular side. A helical transmembrane segment spans residues 52–72 (ELVGPMITYLLPLLIGYTGGK). Residues 73–135 (MIYDVRGGVV…SGFEMLVNNF (63 aa)) lie on the Cytoplasmic side of the membrane. The chain crosses the membrane as a helical span at residues 136–157 (SAGILAAILAIVAFLGIGPVVV). Topologically, residues 158–166 (SFSNVLASG) are extracellular. A helical membrane pass occupies residues 167–187 (VEVIIGAGLLPLASIFIEPAK). Topologically, residues 188–274 (VLFLNNAINH…ILMKPTLILA (87 aa)) are cytoplasmic. Residues 275 to 294 (VIAGGMSGVFTFVLFNAGLV) traverse the membrane as a helical segment. The Extracellular portion of the chain corresponds to 295–314 (AVPSPGSIFALLAMTPRGEY). The chain crosses the membrane as a helical span at residues 315-336 (AGVLAGVIIATVVSFVIASIIL). The Cytoplasmic segment spans residues 337-468 (KTSKATAEDL…YDELVNRLKS (132 aa)). The PTS EIIB type-2 domain occupies 380–468 (NKIIFACDAG…YDELVNRLKS (89 aa)). The Phosphocysteine intermediate; for EIIB activity role is filled by Cys386. Cys386 carries the post-translational modification Phosphocysteine; by EIIA.

As to quaternary structure, homodimer.

Its subcellular location is the cell membrane. The enzyme catalyses D-mannitol(out) + N(pros)-phospho-L-histidyl-[protein] = D-mannitol 1-phosphate(in) + L-histidyl-[protein]. Functionally, the phosphoenolpyruvate-dependent sugar phosphotransferase system (sugar PTS), a major carbohydrate active transport system, catalyzes the phosphorylation of incoming sugar substrates concomitantly with their translocation across the cell membrane. The enzyme II CmtAB PTS system is involved in D-mannitol transport. This chain is PTS system mannitol-specific EIICB component (mtlA), found in Halalkalibacterium halodurans (strain ATCC BAA-125 / DSM 18197 / FERM 7344 / JCM 9153 / C-125) (Bacillus halodurans).